The primary structure comprises 328 residues: Ketol-acid reductoisomerase (NADP(+)) (328 aa).

In terms of domain architecture, KARI N-terminal Rossmann spans 2–182; that stretch reads AKIYRDGDAS…GATRAGVIET (181 aa). NADP(+)-binding positions include 25–28, Arg48, Ser53, and 83–86; these read YGIQ and DMEQ. Residue His108 is part of the active site. Position 134 (Gly134) interacts with NADP(+). The KARI C-terminal knotted domain maps to 183 to 328; sequence TFAEETETDL…AEMRKLLFGP (146 aa). Residues Asp191, Glu195, Glu227, and Glu231 each contribute to the Mg(2+) site. Residue Ser252 coordinates substrate.

Belongs to the ketol-acid reductoisomerase family. Requires Mg(2+) as cofactor.

The enzyme catalyses (2R)-2,3-dihydroxy-3-methylbutanoate + NADP(+) = (2S)-2-acetolactate + NADPH + H(+). It carries out the reaction (2R,3R)-2,3-dihydroxy-3-methylpentanoate + NADP(+) = (S)-2-ethyl-2-hydroxy-3-oxobutanoate + NADPH + H(+). It participates in amino-acid biosynthesis; L-isoleucine biosynthesis; L-isoleucine from 2-oxobutanoate: step 2/4. It functions in the pathway amino-acid biosynthesis; L-valine biosynthesis; L-valine from pyruvate: step 2/4. Functionally, involved in the biosynthesis of branched-chain amino acids (BCAA). Catalyzes an alkyl-migration followed by a ketol-acid reduction of (S)-2-acetolactate (S2AL) to yield (R)-2,3-dihydroxy-isovalerate. In the isomerase reaction, S2AL is rearranged via a Mg-dependent methyl migration to produce 3-hydroxy-3-methyl-2-ketobutyrate (HMKB). In the reductase reaction, this 2-ketoacid undergoes a metal-dependent reduction by NADPH to yield (R)-2,3-dihydroxy-isovalerate. The chain is Ketol-acid reductoisomerase (NADP(+)) from Pyrobaculum calidifontis (strain DSM 21063 / JCM 11548 / VA1).